Reading from the N-terminus, the 225-residue chain is MAALASSLIRQKREVREPGGSRPVSAQRRVCPRGTKSLCQKQLLILLSKVRLCGGRPTRQDRGPEPQLKGIVTKLFCRQGFYLQANPDGSIQGTPEDTSSFTHFNLIPVGLRVVTIQSAKLGHYMAMNAEGLLYSSPHFTAECRFKECVFENYYVLYASALYRQRRSGRAWYLGLDKEGRVMKGNRVKKTKAAAHFVPKLLEVAMYREPSLHSVPETSPSSPPAH.

The interval 1–28 (MAALASSLIRQKREVREPGGSRPVSAQR) is disordered.

This sequence belongs to the heparin-binding growth factors family. In terms of tissue distribution, brain and eye, and in a segmental pattern of the embryonic body wall. In adult olfactory bulb, hippocampus and most concentrated in Purkinje cell layer of the cerebellum.

Its subcellular location is the nucleus. Probably involved in nervous system development and function. The protein is Fibroblast growth factor 11 (Fgf11) of Mus musculus (Mouse).